A 279-amino-acid polypeptide reads, in one-letter code: Glutamate racemase (279 aa).

Substrate is bound by residues 13-14 (DS) and 45-46 (YG). C76 functions as the Proton donor/acceptor in the catalytic mechanism. Position 77 to 78 (77 to 78 (NT)) interacts with substrate. C185 functions as the Proton donor/acceptor in the catalytic mechanism. Substrate is bound at residue 186–187 (TH).

This sequence belongs to the aspartate/glutamate racemases family.

The catalysed reaction is L-glutamate = D-glutamate. It functions in the pathway cell wall biogenesis; peptidoglycan biosynthesis. Provides the (R)-glutamate required for cell wall biosynthesis. This Synechocystis sp. (strain ATCC 27184 / PCC 6803 / Kazusa) protein is Glutamate racemase.